The chain runs to 255 residues: Imidazole glycerol phosphate synthase subunit HisF (255 aa).

Residues Asp-12 and Asp-131 contribute to the active site.

It belongs to the HisA/HisF family. Heterodimer of HisH and HisF.

The protein resides in the cytoplasm. It catalyses the reaction 5-[(5-phospho-1-deoxy-D-ribulos-1-ylimino)methylamino]-1-(5-phospho-beta-D-ribosyl)imidazole-4-carboxamide + L-glutamine = D-erythro-1-(imidazol-4-yl)glycerol 3-phosphate + 5-amino-1-(5-phospho-beta-D-ribosyl)imidazole-4-carboxamide + L-glutamate + H(+). It participates in amino-acid biosynthesis; L-histidine biosynthesis; L-histidine from 5-phospho-alpha-D-ribose 1-diphosphate: step 5/9. Functionally, IGPS catalyzes the conversion of PRFAR and glutamine to IGP, AICAR and glutamate. The HisF subunit catalyzes the cyclization activity that produces IGP and AICAR from PRFAR using the ammonia provided by the HisH subunit. The chain is Imidazole glycerol phosphate synthase subunit HisF from Neisseria meningitidis serogroup C (strain 053442).